The chain runs to 94 residues: Co-chaperonin GroES (94 aa).

The protein belongs to the GroES chaperonin family. In terms of assembly, heptamer of 7 subunits arranged in a ring. Interacts with the chaperonin GroEL.

It localises to the cytoplasm. Its function is as follows. Together with the chaperonin GroEL, plays an essential role in assisting protein folding. The GroEL-GroES system forms a nano-cage that allows encapsulation of the non-native substrate proteins and provides a physical environment optimized to promote and accelerate protein folding. GroES binds to the apical surface of the GroEL ring, thereby capping the opening of the GroEL channel. The protein is Co-chaperonin GroES of Bacillus sp. (strain PS3).